We begin with the raw amino-acid sequence, 299 residues long: Protein translocase subunit SecF (299 aa).

6 helical membrane passes run 14–34, 142–162, 166–186, 193–213, 245–265, and 270–290; these read VLIV…FYHG, IFLV…RFKL, IASI…LGVF, YIIV…IIIF, LTSV…EGSI, and LVFM…ASPI.

The protein belongs to the SecD/SecF family. SecF subfamily. In terms of assembly, forms a complex with SecD. Part of the essential Sec protein translocation apparatus which comprises SecA, SecYEG and auxiliary proteins SecDF. Other proteins may also be involved.

The protein resides in the cell inner membrane. In terms of biological role, part of the Sec protein translocase complex. Interacts with the SecYEG preprotein conducting channel. SecDF uses the proton motive force (PMF) to complete protein translocation after the ATP-dependent function of SecA. This Borreliella burgdorferi (strain ATCC 35210 / DSM 4680 / CIP 102532 / B31) (Borrelia burgdorferi) protein is Protein translocase subunit SecF.